The chain runs to 386 residues: Succinate--CoA ligase [ADP-forming] subunit beta (386 aa).

The ATP-grasp domain occupies 9–244; sequence KEILHKFNVP…YDEEVKEEIE (236 aa). ATP contacts are provided by residues K46, 53 to 55, E99, S102, and E107; that span reads GRG. Mg(2+) contacts are provided by N199 and D213. Substrate is bound by residues N264 and 321 to 323; that span reads GIM.

It belongs to the succinate/malate CoA ligase beta subunit family. As to quaternary structure, heterotetramer of two alpha and two beta subunits. It depends on Mg(2+) as a cofactor.

It catalyses the reaction succinate + ATP + CoA = succinyl-CoA + ADP + phosphate. The catalysed reaction is GTP + succinate + CoA = succinyl-CoA + GDP + phosphate. Its pathway is carbohydrate metabolism; tricarboxylic acid cycle; succinate from succinyl-CoA (ligase route): step 1/1. Its function is as follows. Succinyl-CoA synthetase functions in the citric acid cycle (TCA), coupling the hydrolysis of succinyl-CoA to the synthesis of either ATP or GTP and thus represents the only step of substrate-level phosphorylation in the TCA. The beta subunit provides nucleotide specificity of the enzyme and binds the substrate succinate, while the binding sites for coenzyme A and phosphate are found in the alpha subunit. The chain is Succinate--CoA ligase [ADP-forming] subunit beta from Wolbachia sp. subsp. Brugia malayi (strain TRS).